We begin with the raw amino-acid sequence, 221 residues long: Membrane-bound lytic murein transglycosylase E (221 aa).

Belongs to the transglycosylase Slt family.

It carries out the reaction Exolytic cleavage of the (1-&gt;4)-beta-glycosidic linkage between N-acetylmuramic acid (MurNAc) and N-acetylglucosamine (GlcNAc) residues in peptidoglycan, from either the reducing or the non-reducing ends of the peptidoglycan chains, with concomitant formation of a 1,6-anhydrobond in the MurNAc residue.. Murein-degrading enzyme. May play a role in recycling of muropeptides during cell elongation and/or cell division. The polypeptide is Membrane-bound lytic murein transglycosylase E (mltE) (Buchnera aphidicola subsp. Acyrthosiphon pisum (strain APS) (Acyrthosiphon pisum symbiotic bacterium)).